We begin with the raw amino-acid sequence, 756 residues long: Serine/threonine-protein kinase DCLK2 (756 aa).

A disordered region spans residues 1 to 44 (MASTRSIELEHFEERDKRPRPGSRRGAPSSSGGSSISGPKGNGL). Residues 7 to 19 (IELEHFEERDKRP) show a composition bias toward basic and acidic residues. Residues 24-43 (RRGAPSSSGGSSISGPKGNG) show a composition bias toward low complexity. T61 carries the phosphothreonine modification. Doublecortin domains are found at residues 72-158 (KKAR…VDYT) and 196-279 (KLVT…AQDD). Composition is skewed to low complexity over residues 301–311 (KYSGSRSPGFS) and 323–346 (TPSSQLSTPKSTKSSSSSPTSPGS). The tract at residues 301 to 375 (KYSGSRSPGF…GPELDRCLSP (75 aa)) is disordered. Positions 353 to 364 (ISAQGRSSSNVN) are enriched in polar residues. A Phosphoserine modification is found at S361. The region spanning 393–650 (YRIGKVIGDG…AGEILSHPWV (258 aa)) is the Protein kinase domain. ATP-binding positions include 399-407 (IGDGNFAVV) and K422. Residue D514 is the Proton acceptor of the active site. The residue at position 646 (S646) is a Phosphoserine. T665 carries the phosphothreonine modification. Residues 707–756 (QDSSRPSREQTSPVPPSAQEAPPPLESPRPPGPPATSGCDLAGTWRRHRD) form a disordered region. The segment covering 719-740 (PVPPSAQEAPPPLESPRPPGPP) has biased composition (pro residues).

Belongs to the protein kinase superfamily. CAMK Ser/Thr protein kinase family. CaMK subfamily. In terms of assembly, binds to and stabilizes microtubules. Interacts with MAPK8IP1/JIP-1, MAPK8IP2/JIP-2, MAPK9/JNK2, PPP1R9B/NEURABIN-2 and actin. Post-translationally, autophosphorylated. In terms of tissue distribution, expressed in the central and peripheral nervous system including the brain, spinal cord, cranial and dorsal root ganglia and in the parasympathetic ganglia. Present in neurons, but not in glial cells, in most forebrain areas. Strong expression in the hippocampal CA1 pyramidal cell layer. Expressed in the photoreceptor sensory cilium complex and in eyes. Also detected in individual cells of the olfactory epithelium.

The protein resides in the cytoplasm. Its subcellular location is the cytoskeleton. The enzyme catalyses L-seryl-[protein] + ATP = O-phospho-L-seryl-[protein] + ADP + H(+). It carries out the reaction L-threonyl-[protein] + ATP = O-phospho-L-threonyl-[protein] + ADP + H(+). Functionally, protein kinase with a significantly reduced Ca(2+)+/CAM affinity and dependence compared to other members of the CaMK family. May play a role in the down-regulation of CRE-dependent gene activation probably by phosphorylation of the CREB coactivator CRTC2/TORC2 and the resulting retention of TORC2 in the cytoplasm. The sequence is that of Serine/threonine-protein kinase DCLK2 (Dclk2) from Mus musculus (Mouse).